Here is a 798-residue protein sequence, read N- to C-terminus: Protocadherin beta-2 (798 aa).

Positions 1–30 are cleaved as a signal peptide; the sequence is MEAGEGKERVPKQRQVLIFFVLLGIAQASC. At 31–692 the chain is on the extracellular side; that stretch reads QPRHYSVAEE…AQADLLTVYL (662 aa). Cadherin domains lie at 37 to 135, 136 to 244, 249 to 349, 354 to 453, and 458 to 563; these read VAEE…SPVF, LDKE…VPEF, YEVQ…PPEL, LINQ…APAF, and YTLF…SPFV. The N-linked (GlcNAc...) asparagine glycan is linked to N171. K299 carries the post-translational modification N6-acetyllysine. Residues N420 and N438 are each glycosylated (N-linked (GlcNAc...) asparagine). N-linked (GlcNAc...) asparagine glycosylation occurs at N569. The 104-residue stretch at 570-673 folds into the Cadherin 6 domain; the sequence is GSAPCTELVP…LVDGFSQPYL (104 aa). The helical transmembrane segment at 693-713 threads the bilayer; sequence VVALASVSSLFLFSVLLFVAV. The Cytoplasmic segment spans residues 714–798; it reads RLCRRSRAAS…PSFRKSFEFT (85 aa).

The protein localises to the cell membrane. In terms of biological role, potential calcium-dependent cell-adhesion protein. May be involved in the establishment and maintenance of specific neuronal connections in the brain. The chain is Protocadherin beta-2 (PCDHB2) from Homo sapiens (Human).